Consider the following 315-residue polypeptide: Probable cell division protein WhiA (315 aa).

The H-T-H motif DNA-binding region spans 277 to 311 (SLQELGAMMPSGQISKSGVNHRLRKLNQIAEGYQQ).

The protein belongs to the WhiA family.

Its function is as follows. Involved in cell division and chromosome segregation. This chain is Probable cell division protein WhiA, found in Lacticaseibacillus casei (strain BL23) (Lactobacillus casei).